The following is a 332-amino-acid chain: Adenosine deaminase (332 aa).

The Zn(2+) site is built by H12 and H14. The substrate site is built by H14, D16, and G170. H197 contributes to the Zn(2+) binding site. E200 functions as the Proton donor in the catalytic mechanism. Zn(2+) is bound at residue D278. D279 is a substrate binding site.

The protein belongs to the metallo-dependent hydrolases superfamily. Adenosine and AMP deaminases family. Adenosine deaminase subfamily. Zn(2+) is required as a cofactor.

The enzyme catalyses adenosine + H2O + H(+) = inosine + NH4(+). It carries out the reaction 2'-deoxyadenosine + H2O + H(+) = 2'-deoxyinosine + NH4(+). Catalyzes the hydrolytic deamination of adenosine and 2-deoxyadenosine. The sequence is that of Adenosine deaminase from Erwinia tasmaniensis (strain DSM 17950 / CFBP 7177 / CIP 109463 / NCPPB 4357 / Et1/99).